The following is a 1574-amino-acid chain: Synaptojanin-1 (1574 aa).

The 324-residue stretch at 119 to 442 folds into the SAC domain; it reads VRKVLNSGNF…GDSISKIYAG (324 aa). S820 and S830 each carry phosphoserine. Positions 894–971 constitute an RRM domain; it reads GTVLVSIKSS…RTITITLKSP (78 aa). Low complexity predominate over residues 1029-1054; it reads HLQPSSSSGLGTSPSSSPRTSPCQSP. The interval 1029-1327 is disordered; it reads HLQPSSSSGL…GVKQEPTLKS (299 aa). The residue at position 1053 (S1053) is a Phosphoserine. The span at 1080-1100 shows a compositional bias: polar residues; sequence SSQGSPVDTQPAAQKDSSQTL. Residues 1105-1127 are compositionally biased toward pro residues; it reads PPPPRPVAPPARPAPPQRPPPPS. S1147 and S1175 each carry phosphoserine. Position 1198 is an omega-N-methylarginine (R1198). At T1217 the chain carries Phosphothreonine. The segment covering 1268 to 1287 has biased composition (pro residues); sequence TMPPSGPQPNLETPPQPPPR. The segment covering 1288–1307 has biased composition (low complexity); it reads SRSSQSLPSDSSPQLQQEQP. Phosphoserine is present on residues S1290 and S1350. T1354 bears the Phosphothreonine mark. 2 disordered regions span residues 1363–1507 and 1532–1574; these read LPSA…SVCP and LPAR…FTER. Composition is skewed to polar residues over residues 1364-1379, 1393-1402, 1424-1436, and 1472-1484; these read PSAS…SVSC, QESMGSSANP, RVQS…TSWL, and DLQS…TSNP. Positions 1403–1425 are 3 X 3 AA repeats of N-P-F; it reads FPSLPCRNPFTDRTAAPGNPFRV. The span at 1535-1548 shows a compositional bias: pro residues; sequence RRPPPPPPPVPLLP. A compositionally biased stretch (low complexity) spans 1549–1563; it reads PGTTSSAGPSTTLPS. The span at 1565–1574 shows a compositional bias: polar residues; it reads APSTLDFTER.

The protein belongs to the synaptojanin family. This sequence in the central section; belongs to the inositol 1,4,5-trisphosphate 5-phosphatase family. Interacts with ASH/GRB2. Interacts with PACSIN1, PACSIN2 and PACSIN3. Interacts with AMPH, SH3GL1, SH3GL2 and SH3GL3. Interacts with MYO1E (via SH3 domain). Interacts with BIN1 and DNM1. Interacts with EPS15.

The protein localises to the cytoplasm. It is found in the perinuclear region. The enzyme catalyses a 1,2-diacyl-sn-glycero-3-phospho-(1D-myo-inositol-4,5-bisphosphate) + H2O = a 1,2-diacyl-sn-glycero-3-phospho-(1D-myo-inositol 4-phosphate) + phosphate. Functionally, phosphatase that acts on various phosphoinositides, including phosphatidylinositol 4-phosphate, phosphatidylinositol (4,5)-bisphosphate and phosphatidylinositol (3,4,5)-trisphosphate. Has a role in clathrin-mediated endocytosis. Hydrolyzes PIP2 bound to actin regulatory proteins resulting in the rearrangement of actin filaments downstream of tyrosine kinase and ASH/GRB2. This Mus musculus (Mouse) protein is Synaptojanin-1 (Synj1).